The chain runs to 122 residues: Large ribosomal subunit protein uL14 (122 aa).

This sequence belongs to the universal ribosomal protein uL14 family. Part of the 50S ribosomal subunit. Forms a cluster with proteins L3 and L19. In the 70S ribosome, L14 and L19 interact and together make contacts with the 16S rRNA in bridges B5 and B8.

In terms of biological role, binds to 23S rRNA. Forms part of two intersubunit bridges in the 70S ribosome. This Thermosynechococcus vestitus (strain NIES-2133 / IAM M-273 / BP-1) protein is Large ribosomal subunit protein uL14.